The primary structure comprises 340 residues: Nicotinate-nucleotide--dimethylbenzimidazole phosphoribosyltransferase (340 aa).

The active-site Proton acceptor is the glutamate 305.

It belongs to the CobT family.

It catalyses the reaction 5,6-dimethylbenzimidazole + nicotinate beta-D-ribonucleotide = alpha-ribazole 5'-phosphate + nicotinate + H(+). The protein operates within nucleoside biosynthesis; alpha-ribazole biosynthesis; alpha-ribazole from 5,6-dimethylbenzimidazole: step 1/2. In terms of biological role, catalyzes the synthesis of alpha-ribazole-5'-phosphate from nicotinate mononucleotide (NAMN) and 5,6-dimethylbenzimidazole (DMB). In Allorhizobium ampelinum (strain ATCC BAA-846 / DSM 112012 / S4) (Agrobacterium vitis (strain S4)), this protein is Nicotinate-nucleotide--dimethylbenzimidazole phosphoribosyltransferase.